Consider the following 347-residue polypeptide: NADH-quinone oxidoreductase subunit H 1 (347 aa).

Transmembrane regions (helical) follow at residues Ile-14–Leu-34, Pro-50–Phe-70, Ile-83–Pro-103, Val-115–Gly-135, Ile-161–Val-181, Phe-198–Leu-218, Ala-258–Val-278, Val-286–Val-306, and Leu-321–Leu-341.

This sequence belongs to the complex I subunit 1 family. NDH-1 is composed of 14 different subunits. Subunits NuoA, H, J, K, L, M, N constitute the membrane sector of the complex.

Its subcellular location is the cell inner membrane. The catalysed reaction is a quinone + NADH + 5 H(+)(in) = a quinol + NAD(+) + 4 H(+)(out). Its function is as follows. NDH-1 shuttles electrons from NADH, via FMN and iron-sulfur (Fe-S) centers, to quinones in the respiratory chain. The immediate electron acceptor for the enzyme in this species is believed to be ubiquinone. Couples the redox reaction to proton translocation (for every two electrons transferred, four hydrogen ions are translocated across the cytoplasmic membrane), and thus conserves the redox energy in a proton gradient. This subunit may bind ubiquinone. In Rhizobium meliloti (strain 1021) (Ensifer meliloti), this protein is NADH-quinone oxidoreductase subunit H 1.